Reading from the N-terminus, the 307-residue chain is Ribosomal RNA small subunit methyltransferase H (307 aa).

S-adenosyl-L-methionine is bound by residues G33–Y35, D51, F78, D96, and Q103.

The protein belongs to the methyltransferase superfamily. RsmH family.

It localises to the cytoplasm. The catalysed reaction is cytidine(1402) in 16S rRNA + S-adenosyl-L-methionine = N(4)-methylcytidine(1402) in 16S rRNA + S-adenosyl-L-homocysteine + H(+). Its function is as follows. Specifically methylates the N4 position of cytidine in position 1402 (C1402) of 16S rRNA. This Rickettsia conorii (strain ATCC VR-613 / Malish 7) protein is Ribosomal RNA small subunit methyltransferase H.